A 213-amino-acid chain; its full sequence is Eukaryotic translation initiation factor 4E (213 aa).

Phosphoserine; by CK2 occurs at positions 2 and 15. Thr22 bears the Phosphothreonine mark. Residues Ser28 and Ser30 each carry the phosphoserine modification. Lys114 participates in a covalent cross-link: Glycyl lysine isopeptide (Lys-Gly) (interchain with G-Cter in ubiquitin).

The protein belongs to the eukaryotic initiation factor 4E family. As to quaternary structure, component of the eIF4F complex, which composition varies with external and internal environmental conditions. It is composed of at least eIF4A (TIF1/TIF2), eIF4E (TIF45) and eIF4G (TIF4631 or TIF4632). Interacts with PAT1 in a RNA-dependent manner. eIF4E is also known to interact with other partners.

The protein resides in the cytoplasm. Its subcellular location is the nucleus. Functionally, recognizes and binds the 7-methylguanosine (m7G)-containing mRNA cap during an early step in the initiation of protein synthesis and facilitates ribosome binding by inducing the unwinding of the mRNAs secondary structures. The protein is Eukaryotic translation initiation factor 4E (CDC33) of Saccharomyces cerevisiae (strain ATCC 204508 / S288c) (Baker's yeast).